A 221-amino-acid chain; its full sequence is Flagellar L-ring protein 2 (221 aa).

Residues 1 to 16 (MKRFLILTPMVLALCG) form the signal peptide. Residue C17 is the site of N-palmitoyl cysteine attachment. Residue C17 is the site of S-diacylglycerol cysteine attachment.

Belongs to the FlgH family. The basal body constitutes a major portion of the flagellar organelle and consists of four rings (L,P,S, and M) mounted on a central rod.

The protein localises to the cell outer membrane. The protein resides in the bacterial flagellum basal body. Its function is as follows. Assembles around the rod to form the L-ring and probably protects the motor/basal body from shearing forces during rotation. This is Flagellar L-ring protein 2 from Yersinia pseudotuberculosis serotype I (strain IP32953).